We begin with the raw amino-acid sequence, 751 residues long: Proton-associated sugar transporter A (751 aa).

Transmembrane regions (helical) follow at residues 93 to 113 (ILFG…PVLL), 123 to 143 (SLVW…LGAW), 155 to 175 (RPFI…LLNG), 191 to 211 (WGIL…DSAD), 233 to 253 (IHAL…GIHW), and 268 to 288 (VIYI…LVSI). Threonine 500 carries the post-translational modification Phosphothreonine. 6 consecutive transmembrane segments (helical) span residues 536-556 (GWLS…EVVF), 576-596 (VTMG…YSAI), 606-626 (VRTL…LATL), 630-650 (LYVV…LCTL), 688-708 (FLAQ…VGSA), and 710-730 (GVMY…SLCV).

The protein belongs to the glycoside-pentoside-hexuronide (GPH) cation symporter transporter (TC 2.A.2) family. As to expression, predominantly expressed in brain.

The protein localises to the membrane. It catalyses the reaction D-galactose(in) + H(+)(in) = D-galactose(out) + H(+)(out). The catalysed reaction is D-glucose(out) + H(+)(out) = D-glucose(in) + H(+)(in). Proton-associated glucose transporter in the brain. This chain is Proton-associated sugar transporter A, found in Rattus norvegicus (Rat).